Consider the following 396-residue polypeptide: Elongation factor Tu 2 (396 aa).

A tr-type G domain is found at 10 to 206; it reads KPHVNIGTIG…AVDSYIPTPQ (197 aa). Residues 19–26 form a G1 region; that stretch reads GHVDHGKT. Residue 19-26 coordinates GTP; that stretch reads GHVDHGKT. T26 is a binding site for Mg(2+). Residues 60 to 64 are G2; sequence GITIS. Residues 81–84 are G3; it reads DCPG. Residues 81–85 and 136–139 each bind GTP; these read DCPGH and NKVD. Residues 136–139 form a G4 region; it reads NKVD. A G5 region spans residues 174–176; that stretch reads SAL.

The protein belongs to the TRAFAC class translation factor GTPase superfamily. Classic translation factor GTPase family. EF-Tu/EF-1A subfamily. In terms of assembly, monomer.

Its subcellular location is the cytoplasm. It catalyses the reaction GTP + H2O = GDP + phosphate + H(+). GTP hydrolase that promotes the GTP-dependent binding of aminoacyl-tRNA to the A-site of ribosomes during protein biosynthesis. The chain is Elongation factor Tu 2 from Myxococcus xanthus (strain DK1622).